An 891-amino-acid polypeptide reads, in one-letter code: Transportin-1 (891 aa).

HEAT repeat units lie at residues 14-40 (GLRE…QQLQ), 45-83 (FPDF…ATFS), 92-125 (YVKS…IVRV), 131-168 (LFQA…LDVD), 178-208 (NVFM…QYIV), 221-248 (YLQG…VQLI), 260-287 (KNVT…FWSA), 303-381 (PRLI…LSNV), 389-420 (TLMP…GAIA), 432-459 (PQIV…TLSR), 477-510 (FDKI…EEEA), 518-551 (LGII…ADAV), 559-597 (KYLD…QALG), 605-653 (EPVF…GLGA), 664-695 (LRDI…RVCP), 703-740 (QEFL…IKIG), 748-784 (ITVV…WVCP), 792-825 (DHFM…VAAN), and 834-866 (TFIC…KQML). The Importin N-terminal domain maps to 35–103 (IWQQLQHYSQ…KSELLPCIGA (69 aa)). The segment covering 317-330 (DDDESLADAEEDES) has biased composition (acidic residues). Residues 317 to 337 (DDDESLADAEEDESFPDRDQD) are disordered.

It belongs to the importin beta family. Importin beta-2 subfamily.

The protein resides in the cytoplasm. The protein localises to the nucleus. It is found in the nucleoplasm. In terms of biological role, functions in nuclear protein import as nuclear transport receptor. Serves as receptor for nuclear localization signals (NLS) in cargo substrates. Is thought to mediate docking of the importin/substrate complex to the nuclear pore complex (NPC) through binding to nucleoporin and the complex is subsequently translocated through the pore by an energy requiring, Ran-dependent mechanism. At the nucleoplasmic side of the NPC, Ran binds to the importin, the importin/substrate complex dissociates and importin is re-exported from the nucleus to the cytoplasm where GTP hydrolysis releases Ran. The directionality of nuclear import is thought to be conferred by an asymmetric distribution of the GTP- and GDP-bound forms of Ran between the cytoplasm and nucleus. This chain is Transportin-1 (TRN1), found in Oryza sativa subsp. japonica (Rice).